We begin with the raw amino-acid sequence, 239 residues long: Protein NtpR (239 aa).

In terms of domain architecture, Glutamine amidotransferase type-1 spans 12-239 (LIRATDTFQG…GLFDFFVQEF (228 aa)). Cys-113 functions as the Nucleophile in the catalytic mechanism. Active-site residues include His-217 and Glu-219.

The chain is Protein NtpR (ntpR) from Enterococcus hirae (strain ATCC 9790 / DSM 20160 / JCM 8729 / LMG 6399 / NBRC 3181 / NCIMB 6459 / NCDO 1258 / NCTC 12367 / WDCM 00089 / R).